Here is a 172-residue protein sequence, read N- to C-terminus: Caltractin (172 aa).

The tract at residues 1 to 23 (MQKYGSKKIGATSATSSNKQKVQ) is disordered. A compositionally biased stretch (polar residues) spans 12-21 (TSATSSNKQK). 4 EF-hand domains span residues 29-64 (EQRQ…LGFE), 65-99 (PKKE…KMSE), 101-136 (DSHA…LGEN), and 137-172 (MTDE…TNLF). The Ca(2+) site is built by aspartate 42, aspartate 44, serine 46, lysine 48, and glutamate 53.

This sequence belongs to the centrin family. In terms of assembly, monomer.

It localises to the cytoplasm. It is found in the cytoskeleton. The protein localises to the microtubule organizing center. Its subcellular location is the centrosome. Its function is as follows. Plays a fundamental role in microtubule-organizing center structure and function. In Naegleria gruberi (Amoeba), this protein is Caltractin (CTN).